Reading from the N-terminus, the 73-residue chain is Mucroporin-like peptide (73 aa).

An N-terminal signal peptide occupies residues 1–22; the sequence is MKVKCLLAVFLIVLIAAEHCQA. Lysine amide is present on lysine 38. Residues 44 to 73 constitute a propeptide that is removed on maturation; sequence ELGTQFQPRQKNFMRREVDLERLFAEMPDY.

This sequence belongs to the non-disulfide-bridged peptide (NDBP) superfamily. Short antimicrobial peptide (group 4) family. In terms of tissue distribution, expressed by the venom gland.

It localises to the secreted. The protein localises to the target cell membrane. Its function is as follows. Cationic host defense peptide that have antibacterial activity by breaking membranes. Is more effective on Gram-positive than on Gram-negative bacteria. The polypeptide is Mucroporin-like peptide (Lychas mucronatus (Chinese swimming scorpion)).